A 933-amino-acid chain; its full sequence is Protein translocase subunit SecA (933 aa).

Residues glutamine 87, 105–109, and aspartate 515 contribute to the ATP site; that span reads GEGKT. Positions 917, 919, 928, and 929 each coordinate Zn(2+).

This sequence belongs to the SecA family. As to quaternary structure, monomer and homodimer. Part of the essential Sec protein translocation apparatus which comprises SecA, SecYEG and auxiliary proteins SecDF-YajC and YidC. It depends on Zn(2+) as a cofactor.

It localises to the cell inner membrane. Its subcellular location is the cytoplasm. The enzyme catalyses ATP + H2O + cellular proteinSide 1 = ADP + phosphate + cellular proteinSide 2.. Functionally, part of the Sec protein translocase complex. Interacts with the SecYEG preprotein conducting channel. Has a central role in coupling the hydrolysis of ATP to the transfer of proteins into and across the cell membrane, serving both as a receptor for the preprotein-SecB complex and as an ATP-driven molecular motor driving the stepwise translocation of polypeptide chains across the membrane. This chain is Protein translocase subunit SecA, found in Burkholderia cenocepacia (strain ATCC BAA-245 / DSM 16553 / LMG 16656 / NCTC 13227 / J2315 / CF5610) (Burkholderia cepacia (strain J2315)).